The primary structure comprises 489 residues: Ketol-acid reductoisomerase (NADP(+)) (489 aa).

Residues 17–208 (LGVCEFMEQS…GGHKAGVLRS (192 aa)) enclose the KARI N-terminal Rossmann domain. NADP(+) contacts are provided by residues 45-48 (CGAQ), Arg-68, Arg-76, Ser-78, and 108-110 (DKQ). Residue His-132 is part of the active site. Gly-158 contacts NADP(+). KARI C-terminal knotted domains are found at residues 209 to 344 (SFVA…KTAP) and 345 to 485 (QEAP…MTAM). Positions 217, 221, 389, and 393 each coordinate Mg(2+). Residue Ser-414 participates in substrate binding.

Belongs to the ketol-acid reductoisomerase family. It depends on Mg(2+) as a cofactor.

It catalyses the reaction (2R)-2,3-dihydroxy-3-methylbutanoate + NADP(+) = (2S)-2-acetolactate + NADPH + H(+). It carries out the reaction (2R,3R)-2,3-dihydroxy-3-methylpentanoate + NADP(+) = (S)-2-ethyl-2-hydroxy-3-oxobutanoate + NADPH + H(+). The protein operates within amino-acid biosynthesis; L-isoleucine biosynthesis; L-isoleucine from 2-oxobutanoate: step 2/4. It functions in the pathway amino-acid biosynthesis; L-valine biosynthesis; L-valine from pyruvate: step 2/4. Its function is as follows. Involved in the biosynthesis of branched-chain amino acids (BCAA). Catalyzes an alkyl-migration followed by a ketol-acid reduction of (S)-2-acetolactate (S2AL) to yield (R)-2,3-dihydroxy-isovalerate. In the isomerase reaction, S2AL is rearranged via a Mg-dependent methyl migration to produce 3-hydroxy-3-methyl-2-ketobutyrate (HMKB). In the reductase reaction, this 2-ketoacid undergoes a metal-dependent reduction by NADPH to yield (R)-2,3-dihydroxy-isovalerate. This Flavobacterium johnsoniae (strain ATCC 17061 / DSM 2064 / JCM 8514 / BCRC 14874 / CCUG 350202 / NBRC 14942 / NCIMB 11054 / UW101) (Cytophaga johnsonae) protein is Ketol-acid reductoisomerase (NADP(+)).